A 305-amino-acid chain; its full sequence is Peroxisome assembly protein 26 (305 aa).

The Cytoplasmic portion of the chain corresponds to 1-246 (MKSDASTSAA…RRLWGSVVSH (246 aa)). The helical; Signal-anchor for type II membrane protein transmembrane segment at 247-267 (LLSQPFRKGLLAALILCLLIL) threads the bilayer. Over 268-305 (RFDPAAPSSLPFLYQLTQLFRRIQKATLSRLYPLALRD) the chain is Peroxisomal matrix.

Belongs to the peroxin-26 family. Interacts (via its cytoplasmic domain) with PEX6; interaction is direct and is ATP-dependent. Interacts with PEX1; interaction is indirect and is mediated via interaction with PEX6.

The protein resides in the peroxisome membrane. In terms of biological role, peroxisomal docking factor that anchors PEX1 and PEX6 to peroxisome membranes. PEX26 is therefore required for the formation of the PEX1-PEX6 AAA ATPase complex, a complex that mediates the extraction of the PEX5 receptor from peroxisomal membrane. This chain is Peroxisome assembly protein 26, found in Mus musculus (Mouse).